Consider the following 142-residue polypeptide: Phosphoribosyl-AMP cyclohydrolase (142 aa).

Asp-85 lines the Mg(2+) pocket. Position 86 (Cys-86) interacts with Zn(2+). 2 residues coordinate Mg(2+): Asp-87 and Asp-89. Residues Cys-102 and Cys-109 each contribute to the Zn(2+) site. The tract at residues Gly-120–Pro-142 is disordered.

The protein belongs to the PRA-CH family. As to quaternary structure, homodimer. Mg(2+) is required as a cofactor. It depends on Zn(2+) as a cofactor.

The protein resides in the cytoplasm. The catalysed reaction is 1-(5-phospho-beta-D-ribosyl)-5'-AMP + H2O = 1-(5-phospho-beta-D-ribosyl)-5-[(5-phospho-beta-D-ribosylamino)methylideneamino]imidazole-4-carboxamide. It participates in amino-acid biosynthesis; L-histidine biosynthesis; L-histidine from 5-phospho-alpha-D-ribose 1-diphosphate: step 3/9. Functionally, catalyzes the hydrolysis of the adenine ring of phosphoribosyl-AMP. The sequence is that of Phosphoribosyl-AMP cyclohydrolase from Acidothermus cellulolyticus (strain ATCC 43068 / DSM 8971 / 11B).